The following is a 299-amino-acid chain: Acetylglutamate kinase (299 aa).

Residues 62-63 (GG), arginine 84, and asparagine 188 each bind substrate.

This sequence belongs to the acetylglutamate kinase family. ArgB subfamily.

The protein localises to the cytoplasm. The enzyme catalyses N-acetyl-L-glutamate + ATP = N-acetyl-L-glutamyl 5-phosphate + ADP. It participates in amino-acid biosynthesis; L-arginine biosynthesis; N(2)-acetyl-L-ornithine from L-glutamate: step 2/4. In terms of biological role, catalyzes the ATP-dependent phosphorylation of N-acetyl-L-glutamate. In Methanosarcina acetivorans (strain ATCC 35395 / DSM 2834 / JCM 12185 / C2A), this protein is Acetylglutamate kinase.